A 429-amino-acid chain; its full sequence is Adenosylmethionine-8-amino-7-oxononanoate aminotransferase (429 aa).

Trp-52 is a binding site for substrate. Residue 112-113 (GS) coordinates pyridoxal 5'-phosphate. Tyr-144 serves as a coordination point for substrate. Residue Asp-245 coordinates pyridoxal 5'-phosphate. The substrate site is built by Lys-274 and Gly-307. An N6-(pyridoxal phosphate)lysine modification is found at Lys-274. 308–309 (PT) lines the pyridoxal 5'-phosphate pocket. Arg-391 is a substrate binding site.

The protein belongs to the class-III pyridoxal-phosphate-dependent aminotransferase family. BioA subfamily. Homodimer. Pyridoxal 5'-phosphate serves as cofactor.

It localises to the cytoplasm. It carries out the reaction (8S)-8-amino-7-oxononanoate + S-adenosyl-L-methionine = S-adenosyl-4-methylsulfanyl-2-oxobutanoate + (7R,8S)-7,8-diammoniononanoate. It participates in cofactor biosynthesis; biotin biosynthesis; 7,8-diaminononanoate from 8-amino-7-oxononanoate (SAM route): step 1/1. Functionally, catalyzes the transfer of the alpha-amino group from S-adenosyl-L-methionine (SAM) to 7-keto-8-aminopelargonic acid (KAPA) to form 7,8-diaminopelargonic acid (DAPA). It is the only aminotransferase known to utilize SAM as an amino donor. The protein is Adenosylmethionine-8-amino-7-oxononanoate aminotransferase of Buchnera aphidicola subsp. Baizongia pistaciae (strain Bp).